A 199-amino-acid chain; its full sequence is Pneumococcal vaccine antigen A homolog (199 aa).

Its subcellular location is the cell surface. The protein is Pneumococcal vaccine antigen A homolog (pvaA) of Streptococcus pyogenes serotype M3 (strain ATCC BAA-595 / MGAS315).